A 61-amino-acid chain; its full sequence is UPF0434 protein PSPTO_3844 (61 aa).

It belongs to the UPF0434 family.

This chain is UPF0434 protein PSPTO_3844, found in Pseudomonas syringae pv. tomato (strain ATCC BAA-871 / DC3000).